The following is a 767-amino-acid chain: Polyketide biosynthesis protein PksE (767 aa).

Positions 1 to 312 (MITYVFPGQG…QRNVQAGITA (312 aa)) are acyl transferase. Catalysis depends on residues S87 and H193.

In the N-terminal section; belongs to the FabD family.

The protein localises to the cytoplasm. It catalyses the reaction holo-[ACP] + malonyl-CoA = malonyl-[ACP] + CoA. It participates in antibiotic biosynthesis; bacillaene biosynthesis. Functionally, probably involved in some intermediate steps for the synthesis of the antibiotic polyketide bacillaene which is involved in secondary metabolism. Probably has an acyl transferase activity and could also have a flavin mononucleotide-dependent oxidoreductase activity. In Bacillus subtilis (strain 168), this protein is Polyketide biosynthesis protein PksE (pksE).